We begin with the raw amino-acid sequence, 67 residues long: Large ribosomal subunit protein bL31 (67 aa).

Zn(2+) contacts are provided by Cys16, Cys18, Cys36, and Cys39.

This sequence belongs to the bacterial ribosomal protein bL31 family. Type A subfamily. As to quaternary structure, part of the 50S ribosomal subunit. Zn(2+) serves as cofactor.

Binds the 23S rRNA. This Treponema denticola (strain ATCC 35405 / DSM 14222 / CIP 103919 / JCM 8153 / KCTC 15104) protein is Large ribosomal subunit protein bL31.